A 310-amino-acid polypeptide reads, in one-letter code: Olfactory receptor 4K14 (310 aa).

At 1 to 25 (MDPQNYSLVSEFVLHGLCTSRHLQN) the chain is on the extracellular side. Residue asparagine 5 is glycosylated (N-linked (GlcNAc...) asparagine). The helical transmembrane segment at 26 to 49 (FFFIFFFGVYVAIMLGNLLILVTV) threads the bilayer. The Cytoplasmic segment spans residues 50–58 (ISDPCLHSS). A helical membrane pass occupies residues 59 to 80 (PMYFLLGNLAFLDMWLASFATP). The Extracellular portion of the chain corresponds to 81–101 (KMIRDFLSDQKLISFGGCMAQ). An intrachain disulfide couples cysteine 98 to cysteine 190. The chain crosses the membrane as a helical span at residues 102 to 121 (IFFLHFTGGAEMVLLVSMAY). Residues 122–140 (DRYVAICKPLHYMTLMSWQ) are Cytoplasmic-facing. Residues 141 to 159 (TCIRLVLASWVVGFVHSIS) traverse the membrane as a helical segment. Residues 160–196 (QVAFTVNLPYCGPNEVDSFFCDLPLVIKLACMDTYVL) lie on the Extracellular side of the membrane. The chain crosses the membrane as a helical span at residues 197–220 (GIIMISDSGLLSLSCFLLLLISYT). The Cytoplasmic segment spans residues 221–236 (VILLAIRQRAAGSTSK). The chain crosses the membrane as a helical span at residues 237–259 (ALSTCSAHIMVVTLFFGPCIFVY). The Extracellular portion of the chain corresponds to 260 to 270 (VRPFSRFSVDK). The helical transmembrane segment at 271-290 (LLSVFYTIFTPLLNPIIYTL) threads the bilayer. Topologically, residues 291–310 (RNEEMKAAMKKLQNRRVTFQ) are cytoplasmic.

Belongs to the G-protein coupled receptor 1 family.

Its subcellular location is the cell membrane. In terms of biological role, odorant receptor. This Homo sapiens (Human) protein is Olfactory receptor 4K14 (OR4K14).